We begin with the raw amino-acid sequence, 337 residues long: Protein ABHD13 (337 aa).

The chain crosses the membrane as a helical; Signal-anchor for type II membrane protein span at residues 30-50 (LLALILTFHLYGGFVLLGLIL). Catalysis depends on charge relay system residues Ser193, Asp268, and His298. A glycan (N-linked (GlcNAc...) asparagine) is linked at Asn299.

This sequence belongs to the serine esterase family.

Its subcellular location is the membrane. The chain is Protein ABHD13 from Danio rerio (Zebrafish).